The chain runs to 272 residues: Phosphate import ATP-binding protein PstB (272 aa).

Positions 26–267 (VAARNLNFYY…PADRRTQDYI (242 aa)) constitute an ABC transporter domain. 58-65 (GPSGCGKS) lines the ATP pocket.

It belongs to the ABC transporter superfamily. Phosphate importer (TC 3.A.1.7) family. In terms of assembly, the complex is composed of two ATP-binding proteins (PstB), two transmembrane proteins (PstC and PstA) and a solute-binding protein (PstS).

The protein resides in the cell inner membrane. It catalyses the reaction phosphate(out) + ATP + H2O = ADP + 2 phosphate(in) + H(+). Its function is as follows. Part of the ABC transporter complex PstSACB involved in phosphate import. Responsible for energy coupling to the transport system. The sequence is that of Phosphate import ATP-binding protein PstB from Nitrobacter hamburgensis (strain DSM 10229 / NCIMB 13809 / X14).